The primary structure comprises 435 residues: MIGGLFIYNHKGEVLISRVYRDDIGRNAVDAFRVNVIHARQQVRSPVTNIARTSFFHVKRSNIWLAAVTKQNVNAAMVFEFLYKMCDVMAAYFGKISEENIKNNFVLIYELLDEILDFGYPQNSETGALKTFITQQGIKSQHQTKEEQSQITSQVTGQIGWRREGIKYRRNELFLDVLESVNLLMSPQGQVLSAHVSGRVVMKSYLSGMPECKFGMNDKIVIEKQGKGTADETSKSGKQSIAIDDCTFHQCVRLSKFDSERSISFIPPDGEFELMRYRTTKDIILPFRVIPLVREVGRTKLEVKVVIKSNFKPSLLAQKIEVRIPTPLNTSGVQVICMKGKAKYKASENAIVWKIKRMAGMKESQISAEIELLPTNDKKKWARPPISMNFEVPFAPSGLKVRYLKVFEPKLNYSDHDVIKWVRYIGRSGIYETRC.

Serine 45 is modified (phosphoserine). Phosphothreonine is present on threonine 156. The MHD domain occupies 170 to 434; the sequence is RNELFLDVLE…IGRSGIYETR (265 aa). A 1,2-diacyl-sn-glycero-3-phospho-(1D-myo-inositol-3,4,5-trisphosphate) is bound by residues lysine 341, lysine 345, and lysine 354.

Belongs to the adaptor complexes medium subunit family. In terms of assembly, adaptor protein complex 2 (AP-2) is a heterotetramer composed of two large adaptins (alpha-type subunit AP2A1 or AP2A2 and beta-type subunit AP2B1), a medium adaptin (mu-type subunit AP2M1) and a small adaptin (sigma-type subunit AP2S1). Interacts with ATP6V1H and MEGF10. Interacts with EGFR and TTGN1. Interacts with F2R. Interacts with PIP5K1C; tyrosine phosphorylation of PIP5K1C weakens the interaction. Interacts with KIAA0319; required for clathrin-mediated endocytosis of KIAA0319. Interacts with DVL2 (via DEP domain). Interacts with KCNQ1; mediates estrogen-induced internalization via clathrin-coated vesicles. Interacts with P2RX4 (via internalization motif). Together with AP2A1 or AP2A2 and AP2B1, it interacts with ADAM10; this interaction facilitates ADAM10 endocytosis from the plasma membrane during long-term potentiation in hippocampal neurons. Probably interacts with ACE2 (via endocytic sorting signal motif); the interaction is inhibited by ACE2 phosphorylation. Interacts with RALBP1; the interaction is direct. Interacts with TMEM106B (via N-terminus). In terms of processing, phosphorylation at Thr-156 increases the affinity of the AP-2 complex for cargo membrane proteins during the initial stages of endocytosis.

It localises to the cell membrane. The protein resides in the membrane. Its subcellular location is the coated pit. Its function is as follows. Component of the adaptor protein complex 2 (AP-2). Adaptor protein complexes function in protein transport via transport vesicles in different membrane traffic pathways. Adaptor protein complexes are vesicle coat components and appear to be involved in cargo selection and vesicle formation. AP-2 is involved in clathrin-dependent endocytosis in which cargo proteins are incorporated into vesicles surrounded by clathrin (clathrin-coated vesicles, CCVs) which are destined for fusion with the early endosome. The clathrin lattice serves as a mechanical scaffold but is itself unable to bind directly to membrane components. Clathrin-associated adaptor protein (AP) complexes which can bind directly to both the clathrin lattice and to the lipid and protein components of membranes are considered to be the major clathrin adaptors contributing the CCV formation. AP-2 also serves as a cargo receptor to selectively sort the membrane proteins involved in receptor-mediated endocytosis. AP-2 seems to play a role in the recycling of synaptic vesicle membranes from the presynaptic surface. AP-2 recognizes Y-X-X-[FILMV] (Y-X-X-Phi) and [ED]-X-X-X-L-[LI] endocytosis signal motifs within the cytosolic tails of transmembrane cargo molecules. AP-2 may also play a role in maintaining normal post-endocytic trafficking through the ARF6-regulated, non-clathrin pathway. During long-term potentiation in hippocampal neurons, AP-2 is responsible for the endocytosis of ADAM10. The AP-2 mu subunit binds to transmembrane cargo proteins; it recognizes the Y-X-X-Phi motifs. The surface region interacting with to the Y-X-X-Phi motif is inaccessible in cytosolic AP-2, but becomes accessible through a conformational change following phosphorylation of AP-2 mu subunit at Thr-156 in membrane-associated AP-2. The membrane-specific phosphorylation event appears to involve assembled clathrin which activates the AP-2 mu kinase AAK1. Plays a role in endocytosis of frizzled family members upon Wnt signaling. The sequence is that of AP-2 complex subunit mu (AP2M1) from Bos taurus (Bovine).